Reading from the N-terminus, the 152-residue chain is Protein SprT-like (152 aa).

In terms of domain architecture, SprT-like spans 6–151 (LQQLVCRISL…SKCLGKLELL (146 aa)). His-67 contacts Zn(2+). Glu-68 is an active-site residue. Residue His-71 participates in Zn(2+) binding.

This sequence belongs to the SprT family. Zn(2+) serves as cofactor.

It is found in the cytoplasm. In Lysinibacillus sphaericus (strain C3-41), this protein is Protein SprT-like.